Here is a 194-residue protein sequence, read N- to C-terminus: Small ribosomal subunit protein eS7 (194 aa).

This sequence belongs to the eukaryotic ribosomal protein eS7 family.

The chain is Small ribosomal subunit protein eS7 (RpS7) from Drosophila melanogaster (Fruit fly).